Consider the following 293-residue polypeptide: L-ornithine N(alpha)-acyltransferase (293 aa).

Belongs to the acetyltransferase family. OlsB subfamily.

The catalysed reaction is a (3R)-hydroxyacyl-[ACP] + L-ornithine = a lyso-ornithine lipid + holo-[ACP] + H(+). Its pathway is lipid metabolism. Its function is as follows. Catalyzes the first step in the biosynthesis of ornithine lipids, which are phosphorus-free membrane lipids. Catalyzes the 3-hydroxyacyl-acyl carrier protein-dependent acylation of ornithine to form lyso-ornithine lipid (LOL). In Agrobacterium fabrum (strain C58 / ATCC 33970) (Agrobacterium tumefaciens (strain C58)), this protein is L-ornithine N(alpha)-acyltransferase.